A 367-amino-acid chain; its full sequence is Probable dual-specificity RNA methyltransferase RlmN (367 aa).

Glu-92 functions as the Proton acceptor in the catalytic mechanism. One can recognise a Radical SAM core domain in the interval 98–326 (QEYGLSVCVT…YDTLKKNGIN (229 aa)). Cysteines 105 and 341 form a disulfide. [4Fe-4S] cluster contacts are provided by Cys-112, Cys-116, and Cys-119. S-adenosyl-L-methionine is bound by residues 164 to 165 (GE), Ser-196, 219 to 221 (SLH), and Asn-297. The active-site S-methylcysteine intermediate is Cys-341.

The protein belongs to the radical SAM superfamily. RlmN family. [4Fe-4S] cluster serves as cofactor.

Its subcellular location is the cytoplasm. It carries out the reaction adenosine(2503) in 23S rRNA + 2 reduced [2Fe-2S]-[ferredoxin] + 2 S-adenosyl-L-methionine = 2-methyladenosine(2503) in 23S rRNA + 5'-deoxyadenosine + L-methionine + 2 oxidized [2Fe-2S]-[ferredoxin] + S-adenosyl-L-homocysteine. It catalyses the reaction adenosine(37) in tRNA + 2 reduced [2Fe-2S]-[ferredoxin] + 2 S-adenosyl-L-methionine = 2-methyladenosine(37) in tRNA + 5'-deoxyadenosine + L-methionine + 2 oxidized [2Fe-2S]-[ferredoxin] + S-adenosyl-L-homocysteine. Specifically methylates position 2 of adenine 2503 in 23S rRNA and position 2 of adenine 37 in tRNAs. This chain is Probable dual-specificity RNA methyltransferase RlmN, found in Listeria welshimeri serovar 6b (strain ATCC 35897 / DSM 20650 / CCUG 15529 / CIP 8149 / NCTC 11857 / SLCC 5334 / V8).